Reading from the N-terminus, the 570-residue chain is Urease subunit alpha (570 aa).

In terms of domain architecture, Urease spans Gly131–Phe570. Residues His136, His138, and Lys219 each contribute to the Ni(2+) site. The residue at position 219 (Lys219) is an N6-carboxylysine. His221 provides a ligand contact to substrate. Ni(2+)-binding residues include His248 and His274. Catalysis depends on His322, which acts as the Proton donor. Ni(2+) is bound at residue Asp362.

Belongs to the metallo-dependent hydrolases superfamily. Urease alpha subunit family. Heterotrimer of UreA (gamma), UreB (beta) and UreC (alpha) subunits. Three heterotrimers associate to form the active enzyme. Ni cation is required as a cofactor. Post-translationally, carboxylation allows a single lysine to coordinate two nickel ions.

The protein resides in the cytoplasm. It catalyses the reaction urea + 2 H2O + H(+) = hydrogencarbonate + 2 NH4(+). It participates in nitrogen metabolism; urea degradation; CO(2) and NH(3) from urea (urease route): step 1/1. In Rhizobium leguminosarum bv. trifolii (strain WSM2304), this protein is Urease subunit alpha.